The sequence spans 78 residues: Mambalgin-1 (78 aa).

The first 21 residues, 1–21, serve as a signal peptide directing secretion; it reads MKTLLLTLLVVTIVCLDLGYS. Disulfide bonds link Cys-24–Cys-40, Cys-33–Cys-58, Cys-62–Cys-70, and Cys-71–Cys-76.

This sequence belongs to the three-finger toxin family. Short-chain subfamily. Mambalgin sub-subfamily. Expressed by the venom gland.

The protein localises to the secreted. In terms of biological role, this three-finger toxin inhibits ASIC channels. It acts as a gating modifier toxin by decreasing the apparent proton sensitivity of activation and by slightly increasing the apparent proton sensitivity for inactivation. It binds more tightly to the closed state and to a much lesser extent the inactivated/desensitized state of ASIC1a isoform of ASIC1. It interacts directly with the outside surface of the thumb domain of chicken ASIC1a (ASIC1a), but does not insert into the acidic pocket as suggested for mambalgin-2. This binding leads to relocation of the thumb domain that could disrupt the acidic pocket of cASIC1a. It reversibly inhibits rat ASIC1a (IC(50)=3.4-55 nM), rat ASIC1a-ASIC2b (IC(50)=61 nM), rat ASIC1a-ASIC1b (IC(50)=72 nM), human ASIC1a (IC(50)=127-580 nM), chicken ASIC1a (IC(50)=123.6 nM), rat ASIC1b (IC(50)=22.2-203 nM), rat ASIC1a-ASIC2a (IC(50)=152-252 nM). In vivo, it shows a potent naloxone-resistant analgesic effect against acute and inflammatory pain upon central and peripheral injection. In addition, it also has an opioid-independent effect on both thermal and mechanical inflammatory pain after systemic administration and is effective against neuropathic pain. The sequence is that of Mambalgin-1 from Dendroaspis polylepis polylepis (Black mamba).